The sequence spans 303 residues: tRNA-cytidine(32) 2-sulfurtransferase (303 aa).

The PP-loop motif motif lies at 45-50 (SGGKDS). [4Fe-4S] cluster contacts are provided by cysteine 120, cysteine 123, and cysteine 211.

It belongs to the TtcA family. As to quaternary structure, homodimer. The cofactor is Mg(2+). [4Fe-4S] cluster is required as a cofactor.

Its subcellular location is the cytoplasm. The enzyme catalyses cytidine(32) in tRNA + S-sulfanyl-L-cysteinyl-[cysteine desulfurase] + AH2 + ATP = 2-thiocytidine(32) in tRNA + L-cysteinyl-[cysteine desulfurase] + A + AMP + diphosphate + H(+). It participates in tRNA modification. In terms of biological role, catalyzes the ATP-dependent 2-thiolation of cytidine in position 32 of tRNA, to form 2-thiocytidine (s(2)C32). The sulfur atoms are provided by the cysteine/cysteine desulfurase (IscS) system. The chain is tRNA-cytidine(32) 2-sulfurtransferase from Methylobacillus flagellatus (strain ATCC 51484 / DSM 6875 / VKM B-1610 / KT).